A 662-amino-acid polypeptide reads, in one-letter code: Histidine decarboxylase (662 aa).

Residues Y81 and H194 each coordinate substrate. Residue K305 is modified to N6-(pyridoxal phosphate)lysine.

Belongs to the group II decarboxylase family. Homodimer. Pyridoxal 5'-phosphate serves as cofactor.

The enzyme catalyses L-histidine + H(+) = histamine + CO2. Its pathway is amine and polyamine biosynthesis; histamine biosynthesis; histamine from L-histidine: step 1/1. Functionally, catalyzes the biosynthesis of histamine from histidine. This is Histidine decarboxylase (HDC) from Homo sapiens (Human).